Consider the following 769-residue polypeptide: 3-O-beta-D-glucopyranosyl-beta-D-glucuronide phosphorylase (769 aa).

Aspartate 457 serves as the catalytic Proton donor.

The protein belongs to the glycosyl hydrolase 94 family. In terms of assembly, homodimer.

It localises to the cytoplasm. The enzyme catalyses 3-O-beta-D-glucosyl-D-glucuronate + phosphate = aldehydo-D-glucuronate + alpha-D-glucose 1-phosphate. It catalyses the reaction a 3-O-beta-D-glucosyl-beta-D-glucuronoside + phosphate = a beta-D-glucuronoside + alpha-D-glucose 1-phosphate. In terms of biological role, glycoside phosphorylase that catalyzes the reversible phosphorolysis of 3-O-beta-D-glucosyl-D-glucuronate into D-glucuronic acid and alpha-D-glucose 1-phosphate. Cannot phosphorolyze cellobionic acid and laminaribiose. In the reverse direction, using alpha-D-glucose 1-phosphate as a donor substrate, the enzyme acts on D-glucuronate and its artificial derivative p-nitrophenyl-beta-D-glucuronide. The apparent catalytic efficiency towards p-nitrophenyl-beta-D-glucuronide is approximately 5-fold higher than that towards D-glucuronic acid. Is probably involved in the metabolism of oligosaccharides containing the 3-O-beta-D-glucopyranosyl-beta-D-glucuronide structure released from bacterial and plant acidic carbohydrates. The protein is 3-O-beta-D-glucopyranosyl-beta-D-glucuronide phosphorylase of Paenibacillus borealis.